We begin with the raw amino-acid sequence, 75 residues long: Dermaseptin-DA2 (75 aa).

The signal sequence occupies residues methionine 1–cysteine 22. The propeptide occupies glutamate 23 to glutamate 42.

Belongs to the frog skin active peptide (FSAP) family. Dermaseptin subfamily. As to expression, expressed by the skin glands.

The protein localises to the secreted. Functionally, possesses a potent antimicrobial activity against Gram-positive and Gram-negative bacteria. Probably acts by disturbing membrane functions with its amphipathic structure. The chain is Dermaseptin-DA2 from Agalychnis dacnicolor (Giant Mexican leaf frog).